Reading from the N-terminus, the 85-residue chain is Large ribosomal subunit protein bL27 (85 aa).

The segment covering 1–10 (MAQKKGGGST) has biased composition (gly residues). Residues 1–20 (MAQKKGGGSTRNGRDSKPKM) are disordered.

Belongs to the bacterial ribosomal protein bL27 family.

The protein is Large ribosomal subunit protein bL27 of Delftia acidovorans (strain DSM 14801 / SPH-1).